Consider the following 37-residue polypeptide: MKVRASVKKMCPKCRVIRRHGKVMVICSNPKHKQRQG.

This sequence belongs to the bacterial ribosomal protein bL36 family.

The protein localises to the plastid. It is found in the chloroplast. The chain is Large ribosomal subunit protein bL36c from Ostreococcus tauri.